We begin with the raw amino-acid sequence, 264 residues long: Glutamate racemase (264 aa).

Residues 10–11 (DS) and 42–43 (YG) contribute to the substrate site. Cysteine 73 acts as the Proton donor/acceptor in catalysis. Residue 74–75 (NT) coordinates substrate. The active-site Proton donor/acceptor is cysteine 181. 182–183 (TH) serves as a coordination point for substrate.

Belongs to the aspartate/glutamate racemases family.

The catalysed reaction is L-glutamate = D-glutamate. It participates in cell wall biogenesis; peptidoglycan biosynthesis. Functionally, provides the (R)-glutamate required for cell wall biosynthesis. In Thermoanaerobacter sp. (strain X514), this protein is Glutamate racemase.